Reading from the N-terminus, the 373-residue chain is CASP-like protein UU6 (373 aa).

2 disordered regions span residues Met1–Gly100 and Thr172–Lys195. Residues Met1–Ala204 are Cytoplasmic-facing. Residues Lys56 to Thr74 are compositionally biased toward polar residues. The chain crosses the membrane as a helical span at residues Ile205–Val225. Residues Val226–Arg253 lie on the Extracellular side of the membrane. A helical membrane pass occupies residues Tyr254 to Leu274. The Cytoplasmic portion of the chain corresponds to Tyr275–Thr276. Residues Val277–Phe297 traverse the membrane as a helical segment. Over Asp298–Asp342 the chain is Extracellular. Residue Asn317 is glycosylated (N-linked (GlcNAc...) asparagine). Residues Val343–Ile363 traverse the membrane as a helical segment. Over Tyr364–Tyr373 the chain is Cytoplasmic.

The protein belongs to the Casparian strip membrane proteins (CASP) family. Homodimer and heterodimers.

Its subcellular location is the cell membrane. The polypeptide is CASP-like protein UU6 (Physcomitrium patens (Spreading-leaved earth moss)).